A 131-amino-acid chain; its full sequence is UPF0102 protein YraN (131 aa).

Positions Met-1–Thr-19 are enriched in polar residues. The disordered stretch occupies residues Met-1–Gly-20.

The protein belongs to the UPF0102 family.

The protein is UPF0102 protein YraN of Escherichia coli O17:K52:H18 (strain UMN026 / ExPEC).